Reading from the N-terminus, the 173-residue chain is Small ribosomal subunit protein uS5 (173 aa).

One can recognise an S5 DRBM domain in the interval 17–80 (WQERVIQIRR…ADGKKQLIEV (64 aa)).

This sequence belongs to the universal ribosomal protein uS5 family. As to quaternary structure, part of the 30S ribosomal subunit. Contacts proteins S4 and S8.

In terms of biological role, with S4 and S12 plays an important role in translational accuracy. Functionally, located at the back of the 30S subunit body where it stabilizes the conformation of the head with respect to the body. The chain is Small ribosomal subunit protein uS5 from Gloeothece citriformis (strain PCC 7424) (Cyanothece sp. (strain PCC 7424)).